We begin with the raw amino-acid sequence, 268 residues long: Chymotrypsin-C (268 aa).

Positions 1 to 16 (MLGITVFTTFLAYASS) are cleaved as a signal peptide. Positions 17–29 (CGAPIFQPNLSAR) are cleaved as a propeptide — activation peptide. 5 disulfides stabilise this stretch: cysteine 17/cysteine 141, cysteine 59/cysteine 75, cysteine 155/cysteine 222, cysteine 186/cysteine 202, and cysteine 212/cysteine 243. The N-linked (GlcNAc...) asparagine glycan is linked to asparagine 25. One can recognise a Peptidase S1 domain in the interval 30–268 (VVGGEDAIPH…IDWINQKLQL (239 aa)). Catalysis depends on charge relay system residues histidine 74 and aspartate 121. The active-site Charge relay system is the serine 216.

It belongs to the peptidase S1 family. Elastase subfamily. In terms of assembly, monomer. The zymogen is secreted as a ternary complex composed of procarboxypeptidase A, chymotrypsinogen C and proproteinase E. In terms of tissue distribution, pancreas.

It is found in the secreted. It localises to the extracellular space. The catalysed reaction is Preferential cleavage: Leu-|-Xaa, Tyr-|-Xaa, Phe-|-Xaa, Met-|-Xaa, Trp-|-Xaa, Gln-|-Xaa, Asn-|-Xaa.. Functionally, regulates activation and degradation of trypsinogens and procarboxypeptidases by targeting specific cleavage sites within their zymogen precursors. Has chymotrypsin-type protease activity and hypocalcemic activity. This is Chymotrypsin-C (CTRC) from Bos taurus (Bovine).